The sequence spans 555 residues: Potassium-transporting ATPase potassium-binding subunit (555 aa).

10 consecutive transmembrane segments (helical) span residues 2–22 (IWVA…PTGV), 60–80 (QYAL…YFIF), 130–150 (IGIT…VMAF), 173–193 (VFLP…VPQT), 246–266 (MSNI…PFTY), 278–298 (ILFV…TTSE), 374–394 (AGFV…GLMV), 412–432 (LIAV…ALAL), 483–503 (LVMF…AASL), and 525–545 (GIFI…MLVL).

It belongs to the KdpA family. As to quaternary structure, the system is composed of three essential subunits: KdpA, KdpB and KdpC.

It localises to the cell membrane. Functionally, part of the high-affinity ATP-driven potassium transport (or Kdp) system, which catalyzes the hydrolysis of ATP coupled with the electrogenic transport of potassium into the cytoplasm. This subunit binds the extracellular potassium ions and delivers the ions to the membrane domain of KdpB through an intramembrane tunnel. The chain is Potassium-transporting ATPase potassium-binding subunit from Bacillus cereus (strain B4264).